Consider the following 230-residue polypeptide: Demethylmenaquinone methyltransferase (230 aa).

S-adenosyl-L-methionine-binding positions include threonine 62, aspartate 80, 100 to 101, and serine 117; that span reads DA.

Belongs to the class I-like SAM-binding methyltransferase superfamily. MenG/UbiE family.

The enzyme catalyses a 2-demethylmenaquinol + S-adenosyl-L-methionine = a menaquinol + S-adenosyl-L-homocysteine + H(+). It functions in the pathway quinol/quinone metabolism; menaquinone biosynthesis; menaquinol from 1,4-dihydroxy-2-naphthoate: step 2/2. Methyltransferase required for the conversion of demethylmenaquinol (DMKH2) to menaquinol (MKH2). The protein is Demethylmenaquinone methyltransferase of Mycobacterium sp. (strain JLS).